We begin with the raw amino-acid sequence, 89 residues long: Small ribosomal subunit protein uS14 (89 aa).

This sequence belongs to the universal ribosomal protein uS14 family. Part of the 30S ribosomal subunit. Contacts proteins S3 and S10.

Binds 16S rRNA, required for the assembly of 30S particles and may also be responsible for determining the conformation of the 16S rRNA at the A site. The protein is Small ribosomal subunit protein uS14 of Onion yellows phytoplasma (strain OY-M).